We begin with the raw amino-acid sequence, 273 residues long: Dermonecrotic toxin LdSicTox-alphaIB1bii (273 aa).

His-5 is a catalytic residue. Residues Glu-25 and Asp-27 each coordinate Mg(2+). His-41 serves as the catalytic Nucleophile. Cystine bridges form between Cys-45-Cys-51 and Cys-47-Cys-190. Residue Asp-85 participates in Mg(2+) binding. Asn-250 carries an N-linked (GlcNAc...) asparagine glycan.

It belongs to the arthropod phospholipase D family. Class II subfamily. Requires Mg(2+) as cofactor. Expressed by the venom gland.

Its subcellular location is the secreted. The catalysed reaction is an N-(acyl)-sphingosylphosphocholine = an N-(acyl)-sphingosyl-1,3-cyclic phosphate + choline. The enzyme catalyses an N-(acyl)-sphingosylphosphoethanolamine = an N-(acyl)-sphingosyl-1,3-cyclic phosphate + ethanolamine. It carries out the reaction a 1-acyl-sn-glycero-3-phosphocholine = a 1-acyl-sn-glycero-2,3-cyclic phosphate + choline. It catalyses the reaction a 1-acyl-sn-glycero-3-phosphoethanolamine = a 1-acyl-sn-glycero-2,3-cyclic phosphate + ethanolamine. Its function is as follows. Dermonecrotic toxins cleave the phosphodiester linkage between the phosphate and headgroup of certain phospholipids (sphingolipid and lysolipid substrates), forming an alcohol (often choline) and a cyclic phosphate. This toxin acts on sphingomyelin (SM). It may also act on ceramide phosphoethanolamine (CPE), lysophosphatidylcholine (LPC) and lysophosphatidylethanolamine (LPE), but not on lysophosphatidylserine (LPS), and lysophosphatidylglycerol (LPG). It acts by transphosphatidylation, releasing exclusively cyclic phosphate products as second products. Induces dermonecrosis, hemolysis, increased vascular permeability, edema, inflammatory response, and platelet aggregation. This Loxosceles deserta (Desert recluse spider) protein is Dermonecrotic toxin LdSicTox-alphaIB1bii.